The chain runs to 84 residues: Tripartite terminase subunit 2 (84 aa).

It belongs to the herpesviridae TRM2 protein family. In terms of assembly, associates with TRM1 and TRM3 to form the tripartite terminase complex.

It is found in the host nucleus. In terms of biological role, component of the molecular motor that translocates viral genomic DNA in empty capsid during DNA packaging. Forms a tripartite terminase complex together with TRM1 and TRM3 in the host cytoplasm. Once the complex reaches the host nucleus, it interacts with the capsid portal vertex. This portal forms a ring in which genomic DNA is translocated into the capsid. In Alcelaphine herpesvirus 1 (strain C500) (AlHV-1), this protein is Tripartite terminase subunit 2.